Consider the following 889-residue polypeptide: DNA-directed RNA polymerase subunit Rpo1N (889 aa).

Zn(2+)-binding residues include Cys62, Cys65, Cys72, His75, Cys102, Cys105, Cys149, and Cys152. Mg(2+) is bound by residues Asp466, Asp468, and Asp470.

It belongs to the RNA polymerase beta' chain family. As to quaternary structure, part of the RNA polymerase complex. Mg(2+) is required as a cofactor. Requires Zn(2+) as cofactor.

It localises to the cytoplasm. The catalysed reaction is RNA(n) + a ribonucleoside 5'-triphosphate = RNA(n+1) + diphosphate. Its function is as follows. DNA-dependent RNA polymerase (RNAP) catalyzes the transcription of DNA into RNA using the four ribonucleoside triphosphates as substrates. Forms the clamp head domain. The sequence is that of DNA-directed RNA polymerase subunit Rpo1N from Methanococcus vannielii (strain ATCC 35089 / DSM 1224 / JCM 13029 / OCM 148 / SB).